The chain runs to 96 residues: ATP-dependent Clp protease adapter protein ClpS (96 aa).

It belongs to the ClpS family. As to quaternary structure, binds to the N-terminal domain of the chaperone ClpA.

Its function is as follows. Involved in the modulation of the specificity of the ClpAP-mediated ATP-dependent protein degradation. This chain is ATP-dependent Clp protease adapter protein ClpS, found in Campylobacter jejuni subsp. doylei (strain ATCC BAA-1458 / RM4099 / 269.97).